A 314-amino-acid chain; its full sequence is tRNA dimethylallyltransferase 1 (314 aa).

Residue Gly-8–Ser-15 participates in ATP binding. Substrate is bound at residue Thr-10–Ser-15.

This sequence belongs to the IPP transferase family. Monomer. Mg(2+) is required as a cofactor.

The enzyme catalyses adenosine(37) in tRNA + dimethylallyl diphosphate = N(6)-dimethylallyladenosine(37) in tRNA + diphosphate. In terms of biological role, catalyzes the transfer of a dimethylallyl group onto the adenine at position 37 in tRNAs that read codons beginning with uridine, leading to the formation of N6-(dimethylallyl)adenosine (i(6)A). The chain is tRNA dimethylallyltransferase 1 from Mycobacterium ulcerans (strain Agy99).